Reading from the N-terminus, the 1022-residue chain is Translation initiation factor IF-2 (1022 aa).

A compositionally biased stretch (basic and acidic residues) spans 82–94 (EQSRKTLEKEQHL). 2 disordered regions span residues 82–129 (EQSR…AVPA) and 342–436 (SENK…QREL). Residues 104–115 (ASKSSAKGSESA) are compositionally biased toward low complexity. Over residues 375-384 (KAKKGKKKKK) the composition is skewed to basic residues. The span at 421–436 (SEREREQEEGAAQREL) shows a compositional bias: basic and acidic residues. The tr-type G domain maps to 519 to 689 (TRPPVVTIMG…LTEAELRELK (171 aa)). The segment at 528 to 535 (GHVDHGKT) is G1. GTP is bound at residue 528–535 (GHVDHGKT). Residues 553–557 (GITQH) are G2. Residues 575–578 (DTPG) form a G3 region. GTP is bound by residues 575–579 (DTPGH) and 629–632 (NKID). Positions 629–632 (NKID) are G4. Residues 665–667 (SAK) are G5.

It belongs to the TRAFAC class translation factor GTPase superfamily. Classic translation factor GTPase family. IF-2 subfamily.

Its subcellular location is the cytoplasm. Its function is as follows. One of the essential components for the initiation of protein synthesis. Protects formylmethionyl-tRNA from spontaneous hydrolysis and promotes its binding to the 30S ribosomal subunits. Also involved in the hydrolysis of GTP during the formation of the 70S ribosomal complex. The polypeptide is Translation initiation factor IF-2 (Chlorobium chlorochromatii (strain CaD3)).